The sequence spans 57 residues: UPF0391 membrane protein RPD_3366 (57 aa).

2 helical membrane passes run 4–24 (WVVTFLVVALIAGILGFGGIA) and 30–50 (IAKVIFFIAVVLFLISAVVGL).

This sequence belongs to the UPF0391 family.

It localises to the cell membrane. The protein is UPF0391 membrane protein RPD_3366 of Rhodopseudomonas palustris (strain BisB5).